Consider the following 320-residue polypeptide: Methenyltetrahydromethanopterin cyclohydrolase (320 aa).

It belongs to the MCH family.

The protein resides in the cytoplasm. It catalyses the reaction 5,10-methenyl-5,6,7,8-tetrahydromethanopterin + H2O = N(5)-formyl-5,6,7,8-tetrahydromethanopterin + H(+). Catalyzes the hydrolysis of methenyl-H(4)MPT(+) to 5-formyl-H(4)MPT. This chain is Methenyltetrahydromethanopterin cyclohydrolase, found in Methanococcoides burtonii (strain DSM 6242 / NBRC 107633 / OCM 468 / ACE-M).